A 283-amino-acid polypeptide reads, in one-letter code: Putative UTP--glucose-1-phosphate uridylyltransferase (283 aa).

It belongs to the UDPGP type 2 family.

It carries out the reaction alpha-D-glucose 1-phosphate + UTP + H(+) = UDP-alpha-D-glucose + diphosphate. The chain is Putative UTP--glucose-1-phosphate uridylyltransferase from Methanocaldococcus jannaschii (strain ATCC 43067 / DSM 2661 / JAL-1 / JCM 10045 / NBRC 100440) (Methanococcus jannaschii).